The following is a 466-amino-acid chain: Cysteine--tRNA ligase (466 aa).

Residue Cys-29 participates in Zn(2+) binding. The 'HIGH' region signature appears at 31–41 (PTVYNYIHIGN). 3 residues coordinate Zn(2+): Cys-209, His-234, and Glu-238. Residues 266 to 270 (KMSKS) carry the 'KMSKS' region motif. Residue Lys-269 participates in ATP binding. Ser-270 carries the post-translational modification Phosphoserine.

It belongs to the class-I aminoacyl-tRNA synthetase family. In terms of assembly, monomer. The cofactor is Zn(2+).

It localises to the cytoplasm. It carries out the reaction tRNA(Cys) + L-cysteine + ATP = L-cysteinyl-tRNA(Cys) + AMP + diphosphate. This Halalkalibacterium halodurans (strain ATCC BAA-125 / DSM 18197 / FERM 7344 / JCM 9153 / C-125) (Bacillus halodurans) protein is Cysteine--tRNA ligase (cysS).